The primary structure comprises 133 residues: ATP synthase epsilon chain, chloroplastic (133 aa).

The protein belongs to the ATPase epsilon chain family. In terms of assembly, F-type ATPases have 2 components, CF(1) - the catalytic core - and CF(0) - the membrane proton channel. CF(1) has five subunits: alpha(3), beta(3), gamma(1), delta(1), epsilon(1). CF(0) has three main subunits: a, b and c.

It is found in the plastid. It localises to the chloroplast thylakoid membrane. Produces ATP from ADP in the presence of a proton gradient across the membrane. This chain is ATP synthase epsilon chain, chloroplastic, found in Chara vulgaris (Common stonewort).